Here is a 396-residue protein sequence, read N- to C-terminus: Putative nickel insertion protein (396 aa).

Belongs to the LarC family.

The chain is Putative nickel insertion protein from Methanosarcina acetivorans (strain ATCC 35395 / DSM 2834 / JCM 12185 / C2A).